The following is a 364-amino-acid chain: Fructose-bisphosphate aldolase, non-muscle type (364 aa).

Residues R56 and K147 each contribute to the substrate site. K230 serves as the catalytic Schiff-base intermediate with dihydroxyacetone-P.

Belongs to the class I fructose-bisphosphate aldolase family. Homotetramer. In terms of tissue distribution, expressed mainly in the liver and also in brain and other tissues, except for the heart muscle.

It carries out the reaction beta-D-fructose 1,6-bisphosphate = D-glyceraldehyde 3-phosphate + dihydroxyacetone phosphate. It functions in the pathway carbohydrate degradation; glycolysis; D-glyceraldehyde 3-phosphate and glycerone phosphate from D-glucose: step 4/4. This Lethenteron camtschaticum (Japanese lamprey) protein is Fructose-bisphosphate aldolase, non-muscle type.